A 314-amino-acid polypeptide reads, in one-letter code: Acetyl-coenzyme A carboxylase carboxyl transferase subunit alpha (314 aa).

Residues 32–289 enclose the CoA carboxyltransferase C-terminal domain; sequence EIDMLEASLE…KSAFVAQLDS (258 aa).

This sequence belongs to the AccA family. As to quaternary structure, acetyl-CoA carboxylase is a heterohexamer composed of biotin carboxyl carrier protein (AccB), biotin carboxylase (AccC) and two subunits each of ACCase subunit alpha (AccA) and ACCase subunit beta (AccD).

The protein resides in the cytoplasm. The enzyme catalyses N(6)-carboxybiotinyl-L-lysyl-[protein] + acetyl-CoA = N(6)-biotinyl-L-lysyl-[protein] + malonyl-CoA. Its pathway is lipid metabolism; malonyl-CoA biosynthesis; malonyl-CoA from acetyl-CoA: step 1/1. Component of the acetyl coenzyme A carboxylase (ACC) complex. First, biotin carboxylase catalyzes the carboxylation of biotin on its carrier protein (BCCP) and then the CO(2) group is transferred by the carboxyltransferase to acetyl-CoA to form malonyl-CoA. The chain is Acetyl-coenzyme A carboxylase carboxyl transferase subunit alpha from Staphylococcus aureus (strain JH9).